A 228-amino-acid chain; its full sequence is Transcription termination/antitermination protein NusG (228 aa).

This sequence belongs to the NusG family.

Its function is as follows. Participates in transcription elongation, termination and antitermination. This is Transcription termination/antitermination protein NusG from Mycobacterium leprae (strain TN).